We begin with the raw amino-acid sequence, 137 residues long: Glutamate mutase sigma subunit (137 aa).

Residues 3–137 form the B12-binding domain; that stretch reads KKTIVLGVIG…ADLKEDLNIK (135 aa). Adenosylcob(III)alamin contacts are provided by residues 13–17, His-16, 61–63, and 93–97; these read SDCHA, SSL, and NIVVG.

It belongs to the methylaspartate mutase GlmS subunit family. In terms of assembly, heterotetramer composed of 2 epsilon subunits (GlmE) and 2 sigma subunits (GlmS). GlmE exists as a homodimer and GlmS as a monomer. The cofactor is adenosylcob(III)alamin.

The enzyme catalyses (2S,3S)-3-methyl-L-aspartate = L-glutamate. Its pathway is amino-acid degradation; L-glutamate degradation via mesaconate pathway; acetate and pyruvate from L-glutamate: step 1/4. Its function is as follows. Catalyzes the carbon skeleton rearrangement of L-glutamate to L-threo-3-methylaspartate ((2S,3S)-3-methylaspartate). The polypeptide is Glutamate mutase sigma subunit (Clostridium tetani (strain Massachusetts / E88)).